We begin with the raw amino-acid sequence, 180 residues long: ADP-ribosylation factor 4 (180 aa).

The N-myristoyl glycine moiety is linked to residue G2. GTP contacts are provided by residues 24 to 31 (GLDAAGKT), 67 to 71 (DVGGQ), and 126 to 129 (NKQD). Position 147 is a phosphoserine (S147).

It belongs to the small GTPase superfamily. Arf family. In terms of assembly, forms a complex containing RAB11A, ASAP1, RAB3IP, RAP11FIP3 and ARF4; the complex promotes preciliary trafficking; the complex binds to RHO in photoreceptor cells and promotes RHO ciliary transport.

The protein resides in the golgi apparatus. It is found in the membrane. GTP-binding protein that functions as an allosteric activator of the cholera toxin catalytic subunit, an ADP-ribosyltransferase. Involved in protein trafficking; may modulate vesicle budding and uncoating within the Golgi apparatus. Part of the ciliary targeting complex containing Rab11, ASAP1, Rabin8/RAB3IP, RAB11FIP3 and ARF4, which direct preciliary vesicle trafficking to mother centriole and ciliogenesis initiation. The chain is ADP-ribosylation factor 4 (Arf4) from Mus musculus (Mouse).